The primary structure comprises 209 residues: Orotate phosphoribosyltransferase (209 aa).

Residues Arg96, Lys100, His102, and 122 to 130 each bind 5-phospho-alpha-D-ribose 1-diphosphate; that span reads EDLISTGGS. Position 126 (Ser126) interacts with orotate.

Belongs to the purine/pyrimidine phosphoribosyltransferase family. PyrE subfamily. As to quaternary structure, homodimer. The cofactor is Mg(2+).

The catalysed reaction is orotidine 5'-phosphate + diphosphate = orotate + 5-phospho-alpha-D-ribose 1-diphosphate. Its pathway is pyrimidine metabolism; UMP biosynthesis via de novo pathway; UMP from orotate: step 1/2. Its function is as follows. Catalyzes the transfer of a ribosyl phosphate group from 5-phosphoribose 1-diphosphate to orotate, leading to the formation of orotidine monophosphate (OMP). The chain is Orotate phosphoribosyltransferase from Streptococcus pyogenes serotype M5 (strain Manfredo).